Consider the following 477-residue polypeptide: Probable cytosol aminopeptidase (477 aa).

Residues lysine 245 and aspartate 250 each contribute to the Mn(2+) site. The active site involves lysine 257. The Mn(2+) site is built by aspartate 268, aspartate 327, and glutamate 329. The active site involves arginine 331.

It belongs to the peptidase M17 family. Mn(2+) serves as cofactor.

Its subcellular location is the cytoplasm. It catalyses the reaction Release of an N-terminal amino acid, Xaa-|-Yaa-, in which Xaa is preferably Leu, but may be other amino acids including Pro although not Arg or Lys, and Yaa may be Pro. Amino acid amides and methyl esters are also readily hydrolyzed, but rates on arylamides are exceedingly low.. The catalysed reaction is Release of an N-terminal amino acid, preferentially leucine, but not glutamic or aspartic acids.. Presumably involved in the processing and regular turnover of intracellular proteins. Catalyzes the removal of unsubstituted N-terminal amino acids from various peptides. The chain is Probable cytosol aminopeptidase from Exiguobacterium sibiricum (strain DSM 17290 / CCUG 55495 / CIP 109462 / JCM 13490 / 255-15).